We begin with the raw amino-acid sequence, 435 residues long: Light-independent protochlorophyllide reductase subunit N (435 aa).

The [4Fe-4S] cluster site is built by cysteine 23, cysteine 48, and cysteine 108.

The protein belongs to the BchN/ChlN family. In terms of assembly, protochlorophyllide reductase is composed of three subunits; ChlL, ChlN and ChlB. Forms a heterotetramer of two ChlB and two ChlN subunits. [4Fe-4S] cluster serves as cofactor.

It localises to the plastid. The protein localises to the chloroplast. The catalysed reaction is chlorophyllide a + oxidized 2[4Fe-4S]-[ferredoxin] + 2 ADP + 2 phosphate = protochlorophyllide a + reduced 2[4Fe-4S]-[ferredoxin] + 2 ATP + 2 H2O. Its pathway is porphyrin-containing compound metabolism; chlorophyll biosynthesis (light-independent). Functionally, component of the dark-operative protochlorophyllide reductase (DPOR) that uses Mg-ATP and reduced ferredoxin to reduce ring D of protochlorophyllide (Pchlide) to form chlorophyllide a (Chlide). This reaction is light-independent. The NB-protein (ChlN-ChlB) is the catalytic component of the complex. This is Light-independent protochlorophyllide reductase subunit N from Chlorella vulgaris (Green alga).